Reading from the N-terminus, the 1905-residue chain is Alpha-2-macroglobulin (1905 aa).

Residues 1–21 form the signal peptide; it reads MNKQYFLSLFSTLAVALTLSG. The N-palmitoyl cysteine moiety is linked to residue Cys22. The S-diacylglycerol cysteine moiety is linked to residue Cys22. Positions 1438-1441 form a cross-link, isoglutamyl cysteine thioester (Cys-Gln); that stretch reads CTEQ.

The protein belongs to the protease inhibitor I39 (alpha-2-macroglobulin) family. Bacterial alpha-2-macroglobulin subfamily.

The protein resides in the cell membrane. In terms of biological role, protects the bacterial cell from host peptidases. This Pasteurella multocida (strain Pm70) protein is Alpha-2-macroglobulin.